We begin with the raw amino-acid sequence, 188 residues long: Sec-independent protein translocase protein TatB (188 aa).

The chain crosses the membrane as a helical span at residues 1 to 21 (MFDIGWSELVVIGVVALVAIG). Residues 147–188 (LPVPAETHALATTDLAPPDLAHPAPAHPEPTNSEPAKDAKAS) form a disordered region. Low complexity predominate over residues 160-170 (DLAPPDLAHPA).

This sequence belongs to the TatB family. As to quaternary structure, the Tat system comprises two distinct complexes: a TatABC complex, containing multiple copies of TatA, TatB and TatC subunits, and a separate TatA complex, containing only TatA subunits. Substrates initially bind to the TatABC complex, which probably triggers association of the separate TatA complex to form the active translocon.

It is found in the cell inner membrane. Part of the twin-arginine translocation (Tat) system that transports large folded proteins containing a characteristic twin-arginine motif in their signal peptide across membranes. Together with TatC, TatB is part of a receptor directly interacting with Tat signal peptides. TatB may form an oligomeric binding site that transiently accommodates folded Tat precursor proteins before their translocation. The chain is Sec-independent protein translocase protein TatB from Rhodopseudomonas palustris (strain HaA2).